Here is a 230-residue protein sequence, read N- to C-terminus: Sugar fermentation stimulation protein homolog (230 aa).

It belongs to the SfsA family.

The polypeptide is Sugar fermentation stimulation protein homolog (Clostridium botulinum (strain Okra / Type B1)).